The primary structure comprises 403 residues: Protein IQ-DOMAIN 23 (403 aa).

A disordered region spans residues 1–43 (MGFFGRLFGSKKKSDKAASSRDKRRWSFTTRSSNSSKRAPAVT). The Nuclear localization signal signature appears at 10–17 (SKKKSDKA). A compositionally biased stretch (polar residues) spans 27–43 (SFTTRSSNSSKRAPAVT). The calmodulin-binding stretch occupies residues 115-133 (QENIAAMKIQSAFRGYLAR). IQ domains lie at 116 to 144 (ENIA…ALVK) and 145 to 167 (LQAL…RMQT). 3 disordered regions span residues 176 to 208 (RARA…RSLH), 242 to 301 (ILEV…PTSR), and 381 to 403 (GGDS…SFLV). The span at 257 to 267 (LRSERNNESPR) shows a compositional bias: basic and acidic residues.

This sequence belongs to the IQD family. As to quaternary structure, binds to multiple calmodulin (CaM) in the presence of Ca(2+) and CaM-like proteins.

The protein localises to the nucleus. It localises to the nucleolus. Its subcellular location is the cytoplasm. The protein resides in the cytoskeleton. It is found in the cell membrane. Its function is as follows. May be involved in cooperative interactions with calmodulins or calmodulin-like proteins. Recruits calmodulin proteins to microtubules, thus being a potential scaffold in cellular signaling and trafficking. May associate with nucleic acids and regulate gene expression at the transcriptional or post-transcriptional level. In Arabidopsis thaliana (Mouse-ear cress), this protein is Protein IQ-DOMAIN 23.